The primary structure comprises 329 residues: Delta-aminolevulinic acid dehydratase (329 aa).

Residues Cys122, Cys124, His131, and Cys132 each coordinate Zn(2+). Lys199 functions as the Schiff-base intermediate with substrate in the catalytic mechanism. Residue Lys199 is modified to N6-succinyllysine. Position 209 (Arg209) interacts with 5-aminolevulinate. Ser215 bears the Phosphoserine mark. Residue Arg221 coordinates 5-aminolevulinate. Position 223 (Cys223) interacts with Zn(2+). The active-site Schiff-base intermediate with substrate is the Lys252. Lys252 bears the N6-succinyllysine mark. The 5-aminolevulinate site is built by Ser279 and Tyr318.

This sequence belongs to the ALAD family. In terms of assembly, homooctamer; active form. Homohexamer; low activity form. It depends on Zn(2+) as a cofactor.

It is found in the cytoplasm. It localises to the cytosol. The enzyme catalyses 2 5-aminolevulinate = porphobilinogen + 2 H2O + H(+). Its pathway is porphyrin-containing compound metabolism; protoporphyrin-IX biosynthesis; coproporphyrinogen-III from 5-aminolevulinate: step 1/4. Its activity is regulated as follows. Can alternate between a fully active homooctamer and a low-activity homohexamer. A bound magnesium ion may promote the assembly of the fully active homooctamer. The magnesium-binding site is absent in the low-activity homohexamer. Inhibited by compounds that favor the hexameric state. Inhibited by divalent lead ions. The lead ions partially displace the zinc cofactor. Catalyzes an early step in the biosynthesis of tetrapyrroles. Binds two molecules of 5-aminolevulinate per subunit, each at a distinct site, and catalyzes their condensation to form porphobilinogen. This Bos taurus (Bovine) protein is Delta-aminolevulinic acid dehydratase (ALAD).